We begin with the raw amino-acid sequence, 231 residues long: Maleylacetoacetate isomerase maiA (231 aa).

Positions 7 to 93 constitute a GST N-terminal domain; it reads PKVTLYTYFR…YLEEITPASS (87 aa). Residues 102–224 enclose the GST C-terminal domain; sequence NPEARAVVRT…HWRTQPDTPE (123 aa).

The protein belongs to the GST superfamily. Zeta family.

The enzyme catalyses 4-maleylacetoacetate = 4-fumarylacetoacetate. Its pathway is amino-acid degradation; L-phenylalanine degradation; acetoacetate and fumarate from L-phenylalanine: step 5/6. In terms of biological role, maleylacetoacetate isomerase; part of the L-tyrosine degradation gene cluster that mediates the biosynthesis of the brownish pigment pyomelanin as an alternative melanin. The 4-hydroxyphenylpyruvate dioxygenase hppD catalyzes the conversion of 4-hydroxyphenylpyruvate to homogentisic acid (HGA). The protein hmgX is crucial for this conversion and thus, probably functions as an accessory factor to mediate specific activity of hppD. The homogentisate 1,2-dioxygenase hmgA is then involved in the cleavage of the aromatic ring of HGA and its conversion to 4-maleylacetoacetate. When hmgA activity is lowered by the cell wall integrity (CWI) signaling pathway, HGA accumulates and leads to the production of pyomelanin through benzoquinone acetic acid after oxidation and polymerization. On the opposite, in non-stress conditions, both hppD and hmgA activities are balanced and HGA is degraded into 4-maleylacetoacetate. 4-maleylacetoacetate is further converted to 4-fumarylacetoacetate by the maleylacetoacetate isomerase maiA, which is degraded into fumarate and acetoacetate by the fumarylacetoacetase fahA. In Aspergillus fumigatus (strain ATCC MYA-4609 / CBS 101355 / FGSC A1100 / Af293) (Neosartorya fumigata), this protein is Maleylacetoacetate isomerase maiA.